The sequence spans 109 residues: MLTAENIQLNCYETVYILKSDLNEDKTLSIINDYKSMLTNGGAKNIVLQHRGRRHLSYTINDYHDGIYVQVNYEGNGQLVKSFEKSLRFDDNIIRYLTNKQKRNIKKDS.

This sequence belongs to the bacterial ribosomal protein bS6 family.

The protein resides in the plastid. The protein localises to the chloroplast. In terms of biological role, binds together with bS18 to 16S ribosomal RNA. The chain is Small ribosomal subunit protein bS6c from Pyropia yezoensis (Susabi-nori).